Consider the following 157-residue polypeptide: SsrA-binding protein (157 aa).

Residues 133–157 (LHDKRETEKKRDWSREKGRLLRARG) form a disordered region. Over residues 135 to 151 (DKRETEKKRDWSREKGR) the composition is skewed to basic and acidic residues.

The protein belongs to the SmpB family.

It localises to the cytoplasm. Its function is as follows. Required for rescue of stalled ribosomes mediated by trans-translation. Binds to transfer-messenger RNA (tmRNA), required for stable association of tmRNA with ribosomes. tmRNA and SmpB together mimic tRNA shape, replacing the anticodon stem-loop with SmpB. tmRNA is encoded by the ssrA gene; the 2 termini fold to resemble tRNA(Ala) and it encodes a 'tag peptide', a short internal open reading frame. During trans-translation Ala-aminoacylated tmRNA acts like a tRNA, entering the A-site of stalled ribosomes, displacing the stalled mRNA. The ribosome then switches to translate the ORF on the tmRNA; the nascent peptide is terminated with the 'tag peptide' encoded by the tmRNA and targeted for degradation. The ribosome is freed to recommence translation, which seems to be the essential function of trans-translation. This Bradyrhizobium diazoefficiens (strain JCM 10833 / BCRC 13528 / IAM 13628 / NBRC 14792 / USDA 110) protein is SsrA-binding protein.